The following is a 348-amino-acid chain: Phenylalanine--tRNA ligase alpha subunit (348 aa).

Glu-259 is a Mg(2+) binding site.

Belongs to the class-II aminoacyl-tRNA synthetase family. Phe-tRNA synthetase alpha subunit type 1 subfamily. Tetramer of two alpha and two beta subunits. It depends on Mg(2+) as a cofactor.

It localises to the cytoplasm. It catalyses the reaction tRNA(Phe) + L-phenylalanine + ATP = L-phenylalanyl-tRNA(Phe) + AMP + diphosphate + H(+). This chain is Phenylalanine--tRNA ligase alpha subunit, found in Ligilactobacillus salivarius (strain UCC118) (Lactobacillus salivarius).